The chain runs to 314 residues: Methionyl-tRNA formyltransferase (314 aa).

108 to 111 contributes to the (6S)-5,6,7,8-tetrahydrofolate binding site; it reads SLLP.

The protein belongs to the Fmt family.

It catalyses the reaction L-methionyl-tRNA(fMet) + (6R)-10-formyltetrahydrofolate = N-formyl-L-methionyl-tRNA(fMet) + (6S)-5,6,7,8-tetrahydrofolate + H(+). Attaches a formyl group to the free amino group of methionyl-tRNA(fMet). The formyl group appears to play a dual role in the initiator identity of N-formylmethionyl-tRNA by promoting its recognition by IF2 and preventing the misappropriation of this tRNA by the elongation apparatus. The sequence is that of Methionyl-tRNA formyltransferase from Akkermansia muciniphila (strain ATCC BAA-835 / DSM 22959 / JCM 33894 / BCRC 81048 / CCUG 64013 / CIP 107961 / Muc).